We begin with the raw amino-acid sequence, 171 residues long: Disulfide bond formation protein B (171 aa).

Residues 1-8 (MRLSYRLV) lie on the Cytoplasmic side of the membrane. The chain crosses the membrane as a helical span at residues 9 to 25 (SGLLVLASIVGMSFALY). The Periplasmic segment spans residues 26–43 (LEHVKGLEPCPLCIFQRV). A disulfide bond links C35 and C38. A helical membrane pass occupies residues 44–60 (GLMAMGFVALIAFLHNP). Residues 61–67 (VSNAIKR) are Cytoplasmic-facing. Residues 68–85 (FYAFLAGVAILWSVGVAG) traverse the membrane as a helical segment. Over 86 to 142 (RHVWLQHLPPDQVPSCGPGLNYLIDALPMKTVLQEVLSGSGECAAIDWTFLGQSLPV) the chain is Periplasmic. C101 and C128 are joined by a disulfide. Residues 143-161 (WSLAYFLLLLLVCLWQLFR) form a helical membrane-spanning segment. The Cytoplasmic segment spans residues 162 to 171 (FYPVFKTAKK).

The protein belongs to the DsbB family.

Its subcellular location is the cell inner membrane. Its function is as follows. Required for disulfide bond formation in some periplasmic proteins. Acts by oxidizing the DsbA protein. The sequence is that of Disulfide bond formation protein B from Acinetobacter baumannii (strain ATCC 17978 / DSM 105126 / CIP 53.77 / LMG 1025 / NCDC KC755 / 5377).